The sequence spans 449 residues: Probable glycine dehydrogenase (decarboxylating) subunit 1 (449 aa).

This sequence belongs to the GcvP family. N-terminal subunit subfamily. As to quaternary structure, the glycine cleavage system is composed of four proteins: P, T, L and H. In this organism, the P 'protein' is a heterodimer of two subunits.

The enzyme catalyses N(6)-[(R)-lipoyl]-L-lysyl-[glycine-cleavage complex H protein] + glycine + H(+) = N(6)-[(R)-S(8)-aminomethyldihydrolipoyl]-L-lysyl-[glycine-cleavage complex H protein] + CO2. Functionally, the glycine cleavage system catalyzes the degradation of glycine. The P protein binds the alpha-amino group of glycine through its pyridoxal phosphate cofactor; CO(2) is released and the remaining methylamine moiety is then transferred to the lipoamide cofactor of the H protein. This is Probable glycine dehydrogenase (decarboxylating) subunit 1 from Solibacter usitatus (strain Ellin6076).